We begin with the raw amino-acid sequence, 148 residues long: Large ribosomal subunit protein uL15 (148 aa).

The span at 1–12 (MSEPIKLHDLRP) shows a compositional bias: basic and acidic residues. Residues 1–52 (MSEPIKLHDLRPAKGANKPKTRVGRGEASKGKTAGRGTKGTKARKQVSAAFE) are disordered.

Belongs to the universal ribosomal protein uL15 family. In terms of assembly, part of the 50S ribosomal subunit.

Binds to the 23S rRNA. This is Large ribosomal subunit protein uL15 from Corynebacterium diphtheriae (strain ATCC 700971 / NCTC 13129 / Biotype gravis).